The following is a 341-amino-acid chain: GTPase Obg (341 aa).

The region spanning 1 to 159 (MKFLDQAKVY…RAIWLRLKLI (159 aa)) is the Obg domain. An OBG-type G domain is found at 160–327 (ADAGLVGLPN…VLRAGAHIIE (168 aa)). GTP contacts are provided by residues 166 to 173 (GLPNAGKS), 191 to 195 (FTTLH), 212 to 215 (DIPG), 279 to 282 (SQID), and 308 to 310 (SAV). 2 residues coordinate Mg(2+): Ser173 and Thr193.

The protein belongs to the TRAFAC class OBG-HflX-like GTPase superfamily. OBG GTPase family. In terms of assembly, monomer. The cofactor is Mg(2+).

The protein resides in the cytoplasm. An essential GTPase which binds GTP, GDP and possibly (p)ppGpp with moderate affinity, with high nucleotide exchange rates and a fairly low GTP hydrolysis rate. Plays a role in control of the cell cycle, stress response, ribosome biogenesis and in those bacteria that undergo differentiation, in morphogenesis control. This chain is GTPase Obg, found in Bartonella tribocorum (strain CIP 105476 / IBS 506).